Reading from the N-terminus, the 298-residue chain is N-acetylmuramic acid 6-phosphate etherase (298 aa).

The region spanning 55–218 (IHAQVSGGGR…STGLMIKSGK (164 aa)) is the SIS domain. E83 serves as the catalytic Proton donor. The active site involves E114.

Belongs to the GCKR-like family. MurNAc-6-P etherase subfamily. As to quaternary structure, homodimer.

The enzyme catalyses N-acetyl-D-muramate 6-phosphate + H2O = N-acetyl-D-glucosamine 6-phosphate + (R)-lactate. It functions in the pathway amino-sugar metabolism; 1,6-anhydro-N-acetylmuramate degradation. Its pathway is amino-sugar metabolism; N-acetylmuramate degradation. It participates in cell wall biogenesis; peptidoglycan recycling. Specifically catalyzes the cleavage of the D-lactyl ether substituent of MurNAc 6-phosphate, producing GlcNAc 6-phosphate and D-lactate. Together with AnmK, is also required for the utilization of anhydro-N-acetylmuramic acid (anhMurNAc) either imported from the medium or derived from its own cell wall murein, and thus plays a role in cell wall recycling. In Escherichia coli O17:K52:H18 (strain UMN026 / ExPEC), this protein is N-acetylmuramic acid 6-phosphate etherase.